The primary structure comprises 341 residues: Mitochondrial dimethyladenosine transferase 1 (341 aa).

Residues 1–27 constitute a mitochondrion transit peptide; the sequence is MASSRTLGTFRLPPLPTIREIIKLFRL. Residues L38, G63, E85, K86, D111, V112, and N141 each contribute to the S-adenosyl-L-methionine site.

This sequence belongs to the class I-like SAM-binding methyltransferase superfamily. rRNA adenine N(6)-methyltransferase family. KsgA subfamily. Interacts with mitochondrial RNA polymerase POLRMT. Interacts with TFAM. Bound to the maturing mtSSU until the late stages of assembly.

It localises to the mitochondrion. The catalysed reaction is adenosine(N)/adenosine(N+1) in rRNA + 4 S-adenosyl-L-methionine = N(6)-dimethyladenosine(N)/N(6)-dimethyladenosine(N+1) in rRNA + 4 S-adenosyl-L-homocysteine + 4 H(+). Functionally, mitochondrial methyltransferase which uses S-adenosyl methionine to dimethylate two highly conserved adjacent adenosine residues (A1583 and A1584) within the loop of helix 45 at the 3-prime end of 12S rRNA, thereby regulating the assembly or stability of the small subunit of the mitochondrial ribosome. Also required for basal transcription of mitochondrial DNA, probably via its interaction with POLRMT and TFAM. Stimulates transcription independently of the methyltransferase activity. The polypeptide is Mitochondrial dimethyladenosine transferase 1 (TFB1M) (Bos taurus (Bovine)).